The following is a 1805-amino-acid chain: Kinesin-like protein KIF13A (1805 aa).

One can recognise a Kinesin motor domain in the interval Lys5 to Ile352. Gly102–Ser109 contributes to the ATP binding site. The stretch at Asn359 to Glu436 forms a coiled coil. The region spanning His469–Val519 is the FHA domain. The span at Glu556–Asp567 shows a compositional bias: basic and acidic residues. Disordered regions lie at residues Glu556–Glu575 and Gln633–Ala656. Coiled coils occupy residues Val602–Lys775 and Asp1100–Val1138. Ser636 carries the post-translational modification Phosphoserine. Ser1287 carries the post-translational modification Phosphoserine. The span at Thr1385–Pro1396 shows a compositional bias: polar residues. The disordered stretch occupies residues Thr1385 to Asp1404. Phosphoserine is present on residues Ser1454, Ile1481, Ser1490, and Met1494. A disordered region spans residues Pro1507 to Glu1531. The stretch at Glu1518–Gln1547 forms a coiled coil. The span at His1519–Asp1528 shows a compositional bias: basic and acidic residues. Residues Ser1529 and Ser1572 each carry the phosphoserine modification. The span at Met1612–Asp1621 shows a compositional bias: low complexity. The segment at Met1612 to Arg1645 is disordered. Phosphoserine is present on residues Ser1648 and Ser1698. The disordered stretch occupies residues Gly1749–His1779. A compositionally biased stretch (polar residues) spans Thr1751 to Lys1771.

This sequence belongs to the TRAFAC class myosin-kinesin ATPase superfamily. Kinesin family. Interacts with AP2B1. Interacts with ZFYVE26. Interacts with AP1G1 and AP1G2. As to expression, widely expressed, with highest levels in heart, brain and skeletal muscle.

Its subcellular location is the cytoplasm. It localises to the cytoskeleton. It is found in the microtubule organizing center. The protein localises to the centrosome. The protein resides in the midbody. Its subcellular location is the endosome membrane. It localises to the golgi apparatus membrane. In terms of biological role, plus end-directed microtubule-dependent motor protein involved in intracellular transport and regulating various processes such as mannose-6-phosphate receptor (M6PR) transport to the plasma membrane, endosomal sorting during melanosome biogenesis and cytokinesis. Mediates the transport of M6PR-containing vesicles from trans-Golgi network to the plasma membrane via direct interaction with the AP-1 complex. During melanosome maturation, required for delivering melanogenic enzymes from recycling endosomes to nascent melanosomes by creating peripheral recycling endosomal subdomains in melanocytes. Also required for the abscission step in cytokinesis: mediates translocation of ZFYVE26, and possibly TTC19, to the midbody during cytokinesis. The protein is Kinesin-like protein KIF13A (KIF13A) of Homo sapiens (Human).